The primary structure comprises 337 residues: Large ribosomal subunit protein uL3 (337 aa).

The tract at residues 1-20 is disordered; it reads MASIHRPKRGSLAFSPRKRA.

It belongs to the universal ribosomal protein uL3 family. In terms of assembly, part of the 50S ribosomal subunit. Forms a cluster with proteins L14 and L24e.

Its function is as follows. One of the primary rRNA binding proteins, it binds directly near the 3'-end of the 23S rRNA, where it nucleates assembly of the 50S subunit. The protein is Large ribosomal subunit protein uL3 of Methanosarcina barkeri (strain Fusaro / DSM 804).